The following is a 508-amino-acid chain: NADH-quinone oxidoreductase subunit N 1 (508 aa).

13 helical membrane-spanning segments follow: residues 2-22 (ILGP…GALL), 47-67 (ALGT…VGFV), 87-107 (FTLF…LLAG), 126-146 (FSTV…LFLG), 175-195 (FLLG…IYGA), 220-240 (ALLL…VSAV), 260-280 (FMAV…LLGA), 291-311 (AGWP…ANLI), 321-341 (MLAY…AATV), 351-371 (VMFY…TLIL), 396-416 (ALAF…AGFF), 431-453 (YTLS…RVLV), and 479-499 (LVVS…SLGI).

This sequence belongs to the complex I subunit 2 family. In terms of assembly, NDH-1 is composed of 14 different subunits. Subunits NuoA, H, J, K, L, M, N constitute the membrane sector of the complex.

It is found in the cell inner membrane. It carries out the reaction a quinone + NADH + 5 H(+)(in) = a quinol + NAD(+) + 4 H(+)(out). In terms of biological role, NDH-1 shuttles electrons from NADH, via FMN and iron-sulfur (Fe-S) centers, to quinones in the respiratory chain. The immediate electron acceptor for the enzyme in this species is believed to be ubiquinone. Couples the redox reaction to proton translocation (for every two electrons transferred, four hydrogen ions are translocated across the cytoplasmic membrane), and thus conserves the redox energy in a proton gradient. This Sorangium cellulosum (strain So ce56) (Polyangium cellulosum (strain So ce56)) protein is NADH-quinone oxidoreductase subunit N 1.